A 481-amino-acid polypeptide reads, in one-letter code: Extracellular exo-alpha-(1-&gt;5)-L-arabinofuranosidase (481 aa).

The N-terminal stretch at methionine 1–alanine 27 is a signal peptide. Residues phenylalanine 37 to proline 336 form a catalytic region. Aspartate 47 acts as the Proton acceptor in catalysis. Asparagine 186 contributes to the substrate binding site. Catalysis depends on glutamate 223, which acts as the Proton donor. Substrate-binding positions include histidine 287, arginine 321, histidine 363–phenylalanine 366, aspartate 379, histidine 457–asparagine 460, and aspartate 475. Positions valine 349–tyrosine 479 are ABD.

Belongs to the glycosyl hydrolase 43 family.

It is found in the secreted. The enzyme catalyses Hydrolysis of terminal non-reducing alpha-L-arabinofuranoside residues in alpha-L-arabinosides.. It participates in glycan metabolism; L-arabinan degradation. Involved in the degradation of arabinan and is a key enzyme in the complete degradation of the plant cell wall. Catalyzes only the cleavage of terminal alpha-(1-&gt;5) arabinofuranosyl bonds of arabinan present in the arabinofuranosyl polysaccharides or oligosaccharides. It cannot act on other arabinose-containing polysaccharides and arabinoxylo-oligosaccharides. This is Extracellular exo-alpha-(1-&gt;5)-L-arabinofuranosidase from Streptomyces avermitilis (strain ATCC 31267 / DSM 46492 / JCM 5070 / NBRC 14893 / NCIMB 12804 / NRRL 8165 / MA-4680).